Consider the following 394-residue polypeptide: Cytochrome b (394 aa).

4 helical membrane-spanning segments follow: residues 39-59, 83-105, 120-140, and 186-206; these read FGSLAGICLVIQIVTGVFLAM, WLLRYMHANGASMFFIVVYLHTF, VWCLGVVIFLLMIVTAFIGYV, and FFSLYHLLPFILVGASLLHLA. Heme b is bound by residues His89 and His103. Residues His191 and His204 each contribute to the heme b site. His209 is a binding site for a ubiquinone. 4 helical membrane passes run 232 to 252, 296 to 316, 328 to 348, and 355 to 374; these read FYVKDLVGWVAFAIFFSIWIF, AGGVAAIALVFICLLALPFFK, IYQGIFWLLLADCLLLGWIGC, and FVTIGQISSIVFFLFFAITP.

Belongs to the cytochrome b family. In terms of assembly, the main subunits of complex b-c1 are: cytochrome b, cytochrome c1 and the Rieske protein. It depends on heme b as a cofactor.

Its subcellular location is the mitochondrion inner membrane. Its function is as follows. Component of the ubiquinol-cytochrome c reductase complex (complex III or cytochrome b-c1 complex) that is part of the mitochondrial respiratory chain. The b-c1 complex mediates electron transfer from ubiquinol to cytochrome c. Contributes to the generation of a proton gradient across the mitochondrial membrane that is then used for ATP synthesis. The chain is Cytochrome b (MT-CYB) from Oenothera berteroana (Bertero's evening primrose).